A 117-amino-acid chain; its full sequence is Ribosome-binding factor A (117 aa).

Belongs to the RbfA family. As to quaternary structure, monomer. Binds 30S ribosomal subunits, but not 50S ribosomal subunits or 70S ribosomes.

Its subcellular location is the cytoplasm. One of several proteins that assist in the late maturation steps of the functional core of the 30S ribosomal subunit. Associates with free 30S ribosomal subunits (but not with 30S subunits that are part of 70S ribosomes or polysomes). Required for efficient processing of 16S rRNA. May interact with the 5'-terminal helix region of 16S rRNA. The sequence is that of Ribosome-binding factor A from Syntrophobacter fumaroxidans (strain DSM 10017 / MPOB).